The chain runs to 1440 residues: Protein lin-15B (1440 aa).

Disordered regions lie at residues 1 to 22 (MQTLKTARLTSNPASIPTSSSS), 48 to 67 (ILRHRTLPAPTQETAHHLDA), 618 to 660 (PKEE…GRPI), and 738 to 769 (KDEPLDEDDFNHPSTDPVPNRTTASSQGPSSY). Over residues 10 to 22 (TSNPASIPTSSSS) the composition is skewed to low complexity. The span at 631–646 (STSSPATSSPTIIRPR) shows a compositional bias: low complexity. The span at 757–767 (NRTTASSQGPS) shows a compositional bias: polar residues. The THAP-type zinc finger occupies 1135–1209 (NPGVCCFCSK…LLKGMIPDAA (75 aa)). Disordered regions lie at residues 1239-1281 (AIDL…EPSQ), 1298-1350 (RELS…GTSQ), and 1395-1440 (FADE…PSNE). Positions 1254–1264 (TQEEEEEEEYE) are enriched in acidic residues. The a.T hook 1 DNA-binding region spans 1317 to 1329 (PNPRGRPRKYPKN). The segment covering 1396 to 1407 (ADEEEEEEEYEE) has biased composition (acidic residues). The segment at residues 1418-1430 (GRPVGRPRKDANK) is a DNA-binding region (a.T hook 2).

Synthetic multivulva (synMuv) class B protein. SynMuv proteins are required to repress the induction of vulval development. Acts redundantly with SynMuv class A protein lin-15A to negatively regulate vulval development. Regulates let-23 basal activity. The sequence is that of Protein lin-15B from Caenorhabditis elegans.